The sequence spans 346 residues: Methionine import ATP-binding protein MetN 1 (346 aa).

The 240-residue stretch at 2 to 241 (IELKNVSKVF…PQHVTTKKFV (240 aa)) folds into the ABC transporter domain. 38–45 (GYSGAGKS) serves as a coordination point for ATP.

The protein belongs to the ABC transporter superfamily. Methionine importer (TC 3.A.1.24) family. As to quaternary structure, the complex is composed of two ATP-binding proteins (MetN), two transmembrane proteins (MetI) and a solute-binding protein (MetQ).

The protein resides in the cell membrane. It carries out the reaction L-methionine(out) + ATP + H2O = L-methionine(in) + ADP + phosphate + H(+). The enzyme catalyses D-methionine(out) + ATP + H2O = D-methionine(in) + ADP + phosphate + H(+). Its function is as follows. Part of the ABC transporter complex MetNIQ involved in methionine import. Responsible for energy coupling to the transport system. The polypeptide is Methionine import ATP-binding protein MetN 1 (Bacillus anthracis).